The sequence spans 178 residues: Bifunctional protein PyrR (178 aa).

Residues 99-111 (IILVDDVLFTGRT) carry the PRPP-binding motif.

It belongs to the purine/pyrimidine phosphoribosyltransferase family. PyrR subfamily. Homodimer and homohexamer; in equilibrium.

It catalyses the reaction UMP + diphosphate = 5-phospho-alpha-D-ribose 1-diphosphate + uracil. Its function is as follows. Regulates transcriptional attenuation of the pyrimidine nucleotide (pyr) operon by binding in a uridine-dependent manner to specific sites on pyr mRNA. This disrupts an antiterminator hairpin in the RNA and favors formation of a downstream transcription terminator, leading to a reduced expression of downstream genes. Functionally, also displays a weak uracil phosphoribosyltransferase activity which is not physiologically significant. The protein is Bifunctional protein PyrR of Clostridium novyi (strain NT).